The chain runs to 505 residues: AMP phosphorylase (505 aa).

Residues Gly169, 195–200 (SRAITG), and Thr204 each bind AMP. Asp257 acts as the Proton donor in catalysis. The AMP site is built by Ser265 and Lys289.

Belongs to the thymidine/pyrimidine-nucleoside phosphorylase family. Type 2 subfamily.

The catalysed reaction is AMP + phosphate = alpha-D-ribose 1,5-bisphosphate + adenine. The enzyme catalyses CMP + phosphate = cytosine + alpha-D-ribose 1,5-bisphosphate. It carries out the reaction UMP + phosphate = alpha-D-ribose 1,5-bisphosphate + uracil. Its function is as follows. Catalyzes the conversion of AMP and phosphate to adenine and ribose 1,5-bisphosphate (R15P). Exhibits phosphorylase activity toward CMP and UMP in addition to AMP. Functions in an archaeal AMP degradation pathway, together with R15P isomerase and RubisCO. The protein is AMP phosphorylase of Methanocorpusculum labreanum (strain ATCC 43576 / DSM 4855 / Z).